Consider the following 562-residue polypeptide: Apyrase (562 aa).

Positions 1–24 (MAGRPGYSEVIFLYVVSVAVIARA) are cleaved as a signal peptide. A divalent metal cation-binding residues include aspartate 47, histidine 49, and aspartate 98. Residue asparagine 112 is glycosylated (N-linked (GlcNAc...) asparagine). A divalent metal cation contacts are provided by asparagine 130, histidine 233, and histidine 257. Arginine 370 serves as a coordination point for AMP. A glycan (N-linked (GlcNAc...) asparagine) is linked at asparagine 390. Residues arginine 405, phenylalanine 424, and aspartate 514 each contribute to the AMP site.

This sequence belongs to the 5'-nucleotidase family. (Microbial infection) Interacts with Zika virus envelope protein E and Zika virus-like particles; the interaction does not affect Zika virus replication in human endothelial cells and keratinocytes. A divalent metal cation serves as cofactor. Post-translationally, the N-terminus is blocked. In terms of tissue distribution, female saliva (at protein level). Female salivary gland (at protein level). Not detected or low-level expression in female carcasses without salivary glands. Not detected in male tissues.

The protein resides in the secreted. It catalyses the reaction a ribonucleoside 5'-triphosphate + 2 H2O = a ribonucleoside 5'-phosphate + 2 phosphate + 2 H(+). Facilitates hematophagy by preventing ADP-, collagen- and thrombin-dependent platelet aggregation in the host. Cleaves adenosine triphosphate (ATP) and adenosine diphosphate (ADP) to adenosine monophosphate (AMP) and inorganic phosphate. May reduce probing time by facilitating the speed of locating blood. Functionally, (Microbial infection) Does not affect Zika virus replication in human endothelial cells and keratinocytes. In Aedes aegypti (Yellowfever mosquito), this protein is Apyrase.